A 436-amino-acid polypeptide reads, in one-letter code: Mitochondrial distribution and morphology protein 12 (436 aa).

One can recognise an SMP-LTD domain in the interval 1 to 436; sequence MSIEVNWGTA…VFPSFYTFLI (436 aa). A compositionally biased stretch (acidic residues) spans 73-84; the sequence is DEDGDSGSEISE. Disordered stretches follow at residues 73–98, 184–275, and 352–380; these read DEDG…WDRT, AVAG…RMRE, and GSGS…PHQK. Residues 85–98 are compositionally biased toward basic and acidic residues; that stretch reads ELQHRTHDNPWDRT. Composition is skewed to polar residues over residues 190-206 and 222-243; these read PFTT…QGNK and DSSN…SNRS. Over residues 244 to 255 the composition is skewed to basic and acidic residues; the sequence is SHPDGHPEHNDD. The segment covering 256–267 has biased composition (polar residues); that stretch reads PISSSENPLLQN.

Belongs to the MDM12 family. As to quaternary structure, component of the ER-mitochondria encounter structure (ERMES) or MDM complex, composed of mmm1, mdm10, mdm12 and mdm34. A mmm1 homodimer associates with one molecule of mdm12 on each side in a pairwise head-to-tail manner, and the SMP-LTD domains of mmm1 and mdm12 generate a continuous hydrophobic tunnel for phospholipid trafficking.

The protein localises to the mitochondrion outer membrane. It localises to the endoplasmic reticulum membrane. Component of the ERMES/MDM complex, which serves as a molecular tether to connect the endoplasmic reticulum (ER) and mitochondria. Components of this complex are involved in the control of mitochondrial shape and protein biogenesis, and function in nonvesicular lipid trafficking between the ER and mitochondria. Mdm12 is required for the interaction of the ER-resident membrane protein mmm1 and the outer mitochondrial membrane-resident beta-barrel protein mdm10. The mdm12-mmm1 subcomplex functions in the major beta-barrel assembly pathway that is responsible for biogenesis of all mitochondrial outer membrane beta-barrel proteins, and acts in a late step after the SAM complex. The mdm10-mdm12-mmm1 subcomplex further acts in the TOM40-specific pathway after the action of the mdm12-mmm1 complex. Essential for establishing and maintaining the structure of mitochondria and maintenance of mtDNA nucleoids. In Emericella nidulans (strain FGSC A4 / ATCC 38163 / CBS 112.46 / NRRL 194 / M139) (Aspergillus nidulans), this protein is Mitochondrial distribution and morphology protein 12.